Consider the following 423-residue polypeptide: SH2 domain-containing protein 5 (423 aa).

Residues 28 to 146 form the PID domain; sequence AQYVGSFPVD…LLCRSFQLAY (119 aa). The SH2 domain maps to 296 to 392; sequence WAFAGISRPC…LDMGRLNPTY (97 aa). Positions 392–423 are disordered; it reads YEEQDCGPPGRPPRTLRPLSHAKSEAELQGLG.

As to quaternary structure, interacts with BCR.

The protein resides in the postsynaptic density. Functionally, may be involved in synaptic plasticity regulation through the control of Rac-GTP levels. This chain is SH2 domain-containing protein 5, found in Homo sapiens (Human).